The following is a 155-amino-acid chain: Ribosomal RNA large subunit methyltransferase H (155 aa).

Residues L73, G104, and 123-128 (LSPLTL) contribute to the S-adenosyl-L-methionine site.

Belongs to the RNA methyltransferase RlmH family. Homodimer.

The protein localises to the cytoplasm. The enzyme catalyses pseudouridine(1915) in 23S rRNA + S-adenosyl-L-methionine = N(3)-methylpseudouridine(1915) in 23S rRNA + S-adenosyl-L-homocysteine + H(+). Specifically methylates the pseudouridine at position 1915 (m3Psi1915) in 23S rRNA. This chain is Ribosomal RNA large subunit methyltransferase H, found in Pseudomonas syringae pv. tomato (strain ATCC BAA-871 / DC3000).